A 102-amino-acid chain; its full sequence is NADH-quinone oxidoreductase subunit K (102 aa).

The next 3 helical transmembrane spans lie at 5-25 (LAHYLILGAILFAIGIFGIFL), 31-51 (IILLMSIELMLLAVNMNFVAF), and 62-82 (VFVFFILTVAAAEAAIGLAIL).

It belongs to the complex I subunit 4L family. As to quaternary structure, NDH-1 is composed of 14 different subunits. Subunits NuoA, H, J, K, L, M, N constitute the membrane sector of the complex.

Its subcellular location is the cell inner membrane. It catalyses the reaction a quinone + NADH + 5 H(+)(in) = a quinol + NAD(+) + 4 H(+)(out). NDH-1 shuttles electrons from NADH, via FMN and iron-sulfur (Fe-S) centers, to quinones in the respiratory chain. The immediate electron acceptor for the enzyme in this species is believed to be ubiquinone. Couples the redox reaction to proton translocation (for every two electrons transferred, four hydrogen ions are translocated across the cytoplasmic membrane), and thus conserves the redox energy in a proton gradient. This Bordetella avium (strain 197N) protein is NADH-quinone oxidoreductase subunit K.